A 48-amino-acid polypeptide reads, in one-letter code: AEDRKSLSGLTEQEAQEFGTLYTQGVAFVAVIAIVAHALVWAWRPWLQ.

Residues 1–20 (AEDRKSLSGLTEQEAQEFGT) are Cytoplasmic-facing. The chain crosses the membrane as a helical span at residues 21-43 (LYTQGVAFVAVIAIVAHALVWAW). H37 contacts a bacteriochlorophyll. Residues 44–48 (RPWLQ) are Periplasmic-facing.

Belongs to the antenna complex beta subunit family. As to quaternary structure, the core complex is formed by different alpha and beta chains, binding bacteriochlorophyll molecules, and arranged most probably in tetrameric structures disposed around the reaction center. The non-pigmented gamma chains may constitute additional components.

It is found in the cell inner membrane. Its function is as follows. Antenna complexes are light-harvesting systems, which transfer the excitation energy to the reaction centers. The polypeptide is Light-harvesting polypeptide B-885 beta-2 chain (Rhodocyclus tenuis (Rhodospirillum tenue)).